The sequence spans 41 residues: Ostricacin-2 (41 aa).

Disulfide bonds link Cys8–Cys36, Cys15–Cys30, and Cys20–Cys37.

The protein localises to the secreted. Has antibacterial activity against the Gram-positive bacterium S.aureus 1056 MRSA (MIC=1.25 ug/ml) and the Gram-negative bacterium E.coli O157:H7 (MIC=0.96 ug/ml). Has antifungal activity against the yeast C.albicans 3153A (MIC=6.20 ug/ml). The polypeptide is Ostricacin-2 (Struthio camelus (Common ostrich)).